The chain runs to 87 residues: Small ribosomal subunit protein bS20 (87 aa).

The protein belongs to the bacterial ribosomal protein bS20 family.

Functionally, binds directly to 16S ribosomal RNA. This chain is Small ribosomal subunit protein bS20, found in Clostridium perfringens (strain ATCC 13124 / DSM 756 / JCM 1290 / NCIMB 6125 / NCTC 8237 / Type A).